Reading from the N-terminus, the 574-residue chain is Putative ABC transporter ATP-binding protein VV2_1533 (574 aa).

ABC transporter domains follow at residues 3–244 and 299–533; these read IEFS…GIRE and LDVR…ANLT. ATP-binding positions include 37–44 and 332–339; these read GPSGSGKS and GKNGSGKS.

The protein belongs to the ABC transporter superfamily.

The protein resides in the cell inner membrane. Probably part of an ABC transporter complex. Responsible for energy coupling to the transport system. The chain is Putative ABC transporter ATP-binding protein VV2_1533 from Vibrio vulnificus (strain CMCP6).